Here is a 403-residue protein sequence, read N- to C-terminus: Ribosomal RNA large subunit methyltransferase I (403 aa).

The PUA domain maps to 9-88 (YPRLVLSKGR…ESIDIAFFTR (80 aa)).

This sequence belongs to the methyltransferase superfamily. RlmI family.

The protein resides in the cytoplasm. The catalysed reaction is cytidine(1962) in 23S rRNA + S-adenosyl-L-methionine = 5-methylcytidine(1962) in 23S rRNA + S-adenosyl-L-homocysteine + H(+). Its function is as follows. Specifically methylates the cytosine at position 1962 (m5C1962) of 23S rRNA. The chain is Ribosomal RNA large subunit methyltransferase I from Salmonella enteritidis PT4 (strain P125109).